The following is a 445-amino-acid chain: Phosphoglucosamine mutase (445 aa).

Serine 102 (phosphoserine intermediate) is an active-site residue. 4 residues coordinate Mg(2+): serine 102, aspartate 241, aspartate 243, and aspartate 245. At serine 102 the chain carries Phosphoserine.

The protein belongs to the phosphohexose mutase family. Mg(2+) is required as a cofactor. In terms of processing, activated by phosphorylation.

The enzyme catalyses alpha-D-glucosamine 1-phosphate = D-glucosamine 6-phosphate. Its function is as follows. Catalyzes the conversion of glucosamine-6-phosphate to glucosamine-1-phosphate. The sequence is that of Phosphoglucosamine mutase from Shewanella denitrificans (strain OS217 / ATCC BAA-1090 / DSM 15013).